The following is a 344-amino-acid chain: C-C chemokine receptor-like 2 (344 aa).

At 1–43 the chain is on the extracellular side; it reads MANYTLAPEDEYDVLIEGELESDEAEQCDRYDTWALSAQLVPS. N3 carries N-linked (GlcNAc...) asparagine glycosylation. A helical transmembrane segment spans residues 44 to 64; sequence LCSAVFVVGVLDNLLVVLILV. Over 65–74 the chain is Cytoplasmic; that stretch reads KYKGLKRVEN. Residues 75-95 form a helical membrane-spanning segment; it reads IYLLNLAVSNLCFLLTLPFWA. Over 96-104 the chain is Extracellular; sequence HAGGDPMCK. Residues C103 and C181 are joined by a disulfide bond. Residues 105-125 traverse the membrane as a helical segment; that stretch reads ILIGLYFVGLYSETFFNCLLT. Residues 126 to 148 lie on the Cytoplasmic side of the membrane; the sequence is LQRYLVFLHKGNFFSVRRRVPCG. A helical membrane pass occupies residues 149 to 169; the sequence is IVTSAVAWVTAILATVPEFAV. At 170 to 198 the chain is on the extracellular side; sequence YKPQMEDPKYKCAFSRTPFLPADETFWKH. Residues 199–219 traverse the membrane as a helical segment; that stretch reads FLTLKMNVSVLVFPLFIFTFL. Over 220–238 the chain is Cytoplasmic; the sequence is YVQMRKTLRFGEQRYSLFK. Residues 239–259 traverse the membrane as a helical segment; the sequence is LVFAIMVVFLLMWAPYNIALF. Over 260-281 the chain is Extracellular; sequence LSTFKEHFSLSDCKSNYNLDKS. Residues 282–302 traverse the membrane as a helical segment; the sequence is VLITKLIATTHCCVNPLLYVF. Residues 303–344 lie on the Cytoplasmic side of the membrane; sequence LDGTFRKYLCRFFHRRSNTPRQPRRRFAQGTSREEPDRSTEV. Residues 323-344 are disordered; it reads RQPRRRFAQGTSREEPDRSTEV. Residues 334–344 show a composition bias toward basic and acidic residues; the sequence is SREEPDRSTEV.

It belongs to the G-protein coupled receptor 1 family.

It is found in the cell membrane. In terms of biological role, receptor for CCL19 and chemerin/RARRES2. Does not appear to be a signaling receptor, but may have a role in modulating chemokine-triggered immune responses by capturing and internalizing CCL19 or by presenting RARRES2 ligand to CMKLR1, a functional signaling receptor. Plays a critical role for the development of Th2 responses. In Macaca mulatta (Rhesus macaque), this protein is C-C chemokine receptor-like 2 (CCRL2).